Consider the following 69-residue polypeptide: UPF0337 protein ECA0631 (69 aa).

This sequence belongs to the UPF0337 (CsbD) family.

In Pectobacterium atrosepticum (strain SCRI 1043 / ATCC BAA-672) (Erwinia carotovora subsp. atroseptica), this protein is UPF0337 protein ECA0631.